Reading from the N-terminus, the 671-residue chain is Putative ubiquitin thioesterase 232R (671 aa).

4 disordered regions span residues 36-62, 100-123, 171-203, and 250-319; these read EIIDYQKNNPPRRSPSPRRSPSPRRIS, SPKIPSPVRQPSPVHSPVRSPVRQ, NQKPPRRSPSPRRSPSPRRSPSPRRSPSPRPVF, and EPIR…SKRS. Residues 110–123 show a composition bias toward low complexity; it reads PSPVHSPVRSPVRQ. The segment covering 182-200 has biased composition (pro residues); the sequence is RRSPSPRRSPSPRRSPSPR. Over residues 255 to 271 the composition is skewed to low complexity; it reads SSSSRSSRSTRRSSSTK. Basic residues predominate over residues 272 to 319; sequence PSRRSSSRSRRSSSRSRRSSSRSRRSSSRSRRSSRRSTSRSRSLSKRS. In terms of domain architecture, OTU spans 392–521; the sequence is FRMINVPLDG…NFHYIALEPF (130 aa). Residue Asp-400 is part of the active site. The Nucleophile role is filled by Cys-403. His-514 is a catalytic residue. The disordered stretch occupies residues 589-625; it reads KRSLRPSIPPKISTEHRRTPKLRPSVPRPSSIRQSQP.

It catalyses the reaction Thiol-dependent hydrolysis of ester, thioester, amide, peptide and isopeptide bonds formed by the C-terminal Gly of ubiquitin (a 76-residue protein attached to proteins as an intracellular targeting signal).. Its function is as follows. Hydrolase that can remove conjugated ubiquitin from proteins and may therefore play an important regulatory role at the level of protein turnover by preventing degradation. This Acheta domesticus (House cricket) protein is Putative ubiquitin thioesterase 232R.